A 1516-amino-acid polypeptide reads, in one-letter code: Alpha-2-macroglobulin homolog (1516 aa).

An N-terminal signal peptide occupies residues M1–A26.

This sequence belongs to the protease inhibitor I39 (alpha-2-macroglobulin) family. Bacterial alpha-2-macroglobulin subfamily.

This is Alpha-2-macroglobulin homolog from Pseudomonas aeruginosa (strain ATCC 15692 / DSM 22644 / CIP 104116 / JCM 14847 / LMG 12228 / 1C / PRS 101 / PAO1).